Consider the following 141-residue polypeptide: Small ribosomal subunit protein bS16 (141 aa).

Positions 84–141 (TRKARSNPEKSKPKAKAQERLEAARMAEEEAAAAAKAAAEAPAEEAPAAEAPAEEAQA) are disordered. Basic and acidic residues predominate over residues 89–111 (SNPEKSKPKAKAQERLEAARMAE). Residues 115 to 141 (AAAAKAAAEAPAEEAPAAEAPAEEAQA) show a composition bias toward low complexity.

Belongs to the bacterial ribosomal protein bS16 family.

This is Small ribosomal subunit protein bS16 from Parvibaculum lavamentivorans (strain DS-1 / DSM 13023 / NCIMB 13966).